Reading from the N-terminus, the 199-residue chain is Thymidylate kinase (199 aa).

7–14 (GIDGSGKT) serves as a coordination point for ATP.

Belongs to the thymidylate kinase family.

The catalysed reaction is dTMP + ATP = dTDP + ADP. Functionally, phosphorylation of dTMP to form dTDP in both de novo and salvage pathways of dTTP synthesis. The chain is Thymidylate kinase from Tropheryma whipplei (strain Twist) (Whipple's bacillus).